Here is a 118-residue protein sequence, read N- to C-terminus: Large ribosomal subunit protein bL20 (118 aa).

It belongs to the bacterial ribosomal protein bL20 family.

Its function is as follows. Binds directly to 23S ribosomal RNA and is necessary for the in vitro assembly process of the 50S ribosomal subunit. It is not involved in the protein synthesizing functions of that subunit. This Methylibium petroleiphilum (strain ATCC BAA-1232 / LMG 22953 / PM1) protein is Large ribosomal subunit protein bL20.